Consider the following 521-residue polypeptide: Lipid-translocating exporter-like protein RTA1 (521 aa).

The next 7 helical transmembrane spans lie at 186–206 (GAPIFFTIAFAISTILHSWQC), 211–231 (AWKLIWLQPACAALFTLGYAL), 249–269 (LALFILSQICIYLGPPLLELA), 292–312 (VTAFFGGLMAIVEGLSGSGVS), 332–352 (LVALALQVCVIFIFVYLSVLF), 371–391 (TLMTLYLSMALIFIRCVFRLV), and 418–438 (EAYFYAFEASLMLINSFLWNV). The segment at 493–521 (THSQPQELYENPNGNGHKKFRLGNGGRAT) is disordered.

It belongs to the lipid-translocating exporter (LTE) (TC 9.A.26.1) family.

The protein localises to the membrane. Lipid-translocating exporter-like protein; part of the gene cluster that mediates the biosynthesis of phomenoic acid, a long chain aliphatic carboxylic acid that does not appear to be essential for pathogenicity but may play a role in allowing to outcompete other fungi in the environmental niche via its antifungal properties. The protein is Lipid-translocating exporter-like protein RTA1 of Leptosphaeria maculans (strain JN3 / isolate v23.1.3 / race Av1-4-5-6-7-8) (Blackleg fungus).